The chain runs to 263 residues: Trem-like transcript 4 protein (263 aa).

A signal peptide spans 1–28; the sequence is MAWRYSQLLLVPVQLVFLASVCCPGVWG. An Ig-like V-type domain is found at 29-132; the sequence is STVSEELHRM…LREVTVLRNI (104 aa). The Extracellular segment spans residues 29–200; the sequence is STVSEELHRM…GWTSPGLLVS (172 aa). Cysteines 47 and 116 form a disulfide. Residue Asn-100 is glycosylated (N-linked (GlcNAc...) asparagine). Positions 168–191 are disordered; the sequence is SPEETTDSSINGTGHRNQSSSSPG. Residues 201 to 221 traverse the membrane as a helical segment; it reads VQYGLLLLKALMLSVFCVLLC. Over 222–263 the chain is Cytoplasmic; sequence WRSGQGREYMAETMELSKLPHISKSLDTVSHISGYEKKANWY.

In terms of assembly, interacts with TYROBP/DAP12. As to expression, predominantly expressed in spleen, with highest levels on selected populations of macrophages, including red pulp macrophages, and on subsets of dendritic cells (DC), mostly on CD8alpha(+) DC (at protein level). Also expressed on blood and spleen Ly6C(low) monocytes (at protein level). Not expressed on lymphocytes or granulocytes (at protein level).

The protein localises to the cell membrane. Positively regulates Toll-like receptor signaling via TLR7, TLR9 and TLR13 in neutrophils and splenic macrophages. Regulates TLR7 signaling by controlling ligand-induced recruitment of TLR7 from the endoplasmic reticulum to endosomes and lysosomes. Positively regulates Toll-like receptor TLR9-induced production of inflammatory cytokines but is dispensable for IFNB1 production. Involved in the anti-viral response to several viruses including influenza virus, vesicular stomatitis virus and cytomegalovirus. Binds to late apoptotic, and necrotic cells, but not living or early apoptotic cells, but is not essential for uptake of dying cells by dendritic cells (DCs). Does not bind nucleic acids. May participate in antigen presentation. This is Trem-like transcript 4 protein (Treml4) from Mus musculus (Mouse).